The sequence spans 457 residues: ATP synthase subunit beta (457 aa).

Residue 147–154 (GGAGVGKT) coordinates ATP.

It belongs to the ATPase alpha/beta chains family. In terms of assembly, F-type ATPases have 2 components, CF(1) - the catalytic core - and CF(0) - the membrane proton channel. CF(1) has five subunits: alpha(3), beta(3), gamma(1), delta(1), epsilon(1). CF(0) has three main subunits: a(1), b(2) and c(9-12). The alpha and beta chains form an alternating ring which encloses part of the gamma chain. CF(1) is attached to CF(0) by a central stalk formed by the gamma and epsilon chains, while a peripheral stalk is formed by the delta and b chains.

The protein resides in the cell inner membrane. The enzyme catalyses ATP + H2O + 4 H(+)(in) = ADP + phosphate + 5 H(+)(out). Its function is as follows. Produces ATP from ADP in the presence of a proton gradient across the membrane. The catalytic sites are hosted primarily by the beta subunits. This chain is ATP synthase subunit beta, found in Haemophilus ducreyi (strain 35000HP / ATCC 700724).